Here is a 264-residue protein sequence, read N- to C-terminus: Thymidylate synthase (264 aa).

Arg-21 is a binding site for dUMP. His-51 contacts (6R)-5,10-methylene-5,6,7,8-tetrahydrofolate. Residue 126–127 (RR) coordinates dUMP. Cys-146 functions as the Nucleophile in the catalytic mechanism. DUMP contacts are provided by residues 166–169 (RSAD), Asn-177, and 207–209 (HLY). Asp-169 serves as a coordination point for (6R)-5,10-methylene-5,6,7,8-tetrahydrofolate. Ala-263 contributes to the (6R)-5,10-methylene-5,6,7,8-tetrahydrofolate binding site.

This sequence belongs to the thymidylate synthase family. Bacterial-type ThyA subfamily. As to quaternary structure, homodimer.

The protein localises to the cytoplasm. It catalyses the reaction dUMP + (6R)-5,10-methylene-5,6,7,8-tetrahydrofolate = 7,8-dihydrofolate + dTMP. It participates in pyrimidine metabolism; dTTP biosynthesis. Its function is as follows. Catalyzes the reductive methylation of 2'-deoxyuridine-5'-monophosphate (dUMP) to 2'-deoxythymidine-5'-monophosphate (dTMP) while utilizing 5,10-methylenetetrahydrofolate (mTHF) as the methyl donor and reductant in the reaction, yielding dihydrofolate (DHF) as a by-product. This enzymatic reaction provides an intracellular de novo source of dTMP, an essential precursor for DNA biosynthesis. The protein is Thymidylate synthase of Methylorubrum extorquens (strain CM4 / NCIMB 13688) (Methylobacterium extorquens).